Reading from the N-terminus, the 233-residue chain is Type IV secretion system protein PtlE homolog (233 aa).

A helical membrane pass occupies residues 42–62 (VAWAALAVTALSLIAIATMLP).

Belongs to the virB8 family.

It localises to the cell inner membrane. This chain is Type IV secretion system protein PtlE homolog (ptlE), found in Bordetella parapertussis (strain 12822 / ATCC BAA-587 / NCTC 13253).